A 401-amino-acid chain; its full sequence is ATP-dependent RNA helicase eIF4A (401 aa).

The short motif at 28 to 56 (DNFDDMKLKGELLRGIYAYGFERPSAIQQ) is the Q motif element. Positions 59 to 229 (IMPIVTGRDC…KKFMRDPIRI (171 aa)) constitute a Helicase ATP-binding domain. Residue 72 to 79 (AQSGTGKT) participates in ATP binding. A DEAD box motif is present at residues 177 to 180 (DEAD). The Helicase C-terminal domain occupies 240-401 (GIRQFYINVE…EMPLNVADLI (162 aa)).

The protein belongs to the DEAD box helicase family. eIF4A subfamily. Component of the eIF4F complex, which composition varies with external and internal environmental conditions. It is composed of at least eIF4A, eIF4E and eIF4G.

It localises to the cytoplasm. The enzyme catalyses ATP + H2O = ADP + phosphate + H(+). Functionally, ATP-dependent RNA helicase which is a subunit of the eIF4F complex involved in cap recognition and is required for mRNA binding to ribosome. In the current model of translation initiation, eIF4A unwinds RNA secondary structures in the 5'-UTR of mRNAs which is necessary to allow efficient binding of the small ribosomal subunit, and subsequent scanning for the initiator codon. This is ATP-dependent RNA helicase eIF4A (TIF1) from Cryptococcus neoformans var. neoformans serotype D (strain B-3501A) (Filobasidiella neoformans).